Reading from the N-terminus, the 1358-residue chain is Regulatory protein SIR4 (1358 aa).

Polar residues predominate over residues 1–15 (MPNDNKTPNRSSTPK). Disordered stretches follow at residues 1–98 (MPND…PHSN), 252–277 (SLSV…SPGI), 356–466 (HDEK…PPEI), 498–544 (VQGE…ISNG), 677–726 (ASTE…EDEQ), 752–787 (VSDS…DLDT), and 913–970 (HSQE…ENLS). Residues 26–39 (KIPEREEKSNEVKT) show a composition bias toward basic and acidic residues. Composition is skewed to polar residues over residues 49–66 (KSKN…SPHQ) and 75–96 (HKQL…SFPH). Basic and acidic residues predominate over residues 373 to 388 (QKMKEDADLKRMEILK). Over residues 428–437 (QENNYNSTSR) the composition is skewed to polar residues. Residues 452–464 (KNGENKKIGKRPP) show a composition bias toward basic and acidic residues. Over residues 507–517 (RNNTLNVTPSK) the composition is skewed to polar residues. Serine 692 is subject to Phosphoserine. Positions 706-720 (FPVSLSQPSKKSFAN) are enriched in polar residues. Residues 754–766 (DSDDSSSDNDSLT) show a composition bias toward acidic residues. Residues 777 to 787 (NEIKVTNDLDT) are compositionally biased toward basic and acidic residues. Over residues 916-932 (EQNSSSAKPSQIPTVSS) the composition is skewed to polar residues. A Glycyl lysine isopeptide (Lys-Gly) (interchain with G-Cter in SUMO) cross-link involves residue lysine 1128. A coiled-coil region spans residues 1271–1347 (LSFVDIVLSK…DAKINKLMEK (77 aa)).

In terms of assembly, homodimer. Interacts with MPS3. Interacts with RIS1. Interacts with SIR1, SIR2 and SIR3. Interacts with YKU80. Interacts with UBP10. Interacts with RAP1 (via C-terminus).

It is found in the nucleus. Functionally, the proteins SIR1 through SIR4 are required for transcriptional repression of the silent mating type loci, HML and HMR. The proteins SIR2 through SIR4 repress mulitple loci by modulating chromatin structure. Involves the compaction of chromatin fiber into a more condensed form. This is Regulatory protein SIR4 (SIR4) from Saccharomyces cerevisiae (strain ATCC 204508 / S288c) (Baker's yeast).